The primary structure comprises 356 residues: Peptide chain release factor 1 (356 aa).

Residue glutamine 233 is modified to N5-methylglutamine.

The protein belongs to the prokaryotic/mitochondrial release factor family. Methylated by PrmC. Methylation increases the termination efficiency of RF1.

It localises to the cytoplasm. In terms of biological role, peptide chain release factor 1 directs the termination of translation in response to the peptide chain termination codons UAG and UAA. In Oceanobacillus iheyensis (strain DSM 14371 / CIP 107618 / JCM 11309 / KCTC 3954 / HTE831), this protein is Peptide chain release factor 1.